The chain runs to 1218 residues: DNA-directed RNA polymerase subunit beta' (1218 aa).

Zn(2+) is bound by residues C60, C62, C75, and C78. 3 residues coordinate Mg(2+): D455, D457, and D459. Residues C824, C897, C904, and C907 each coordinate Zn(2+). The disordered stretch occupies residues 1195–1218; the sequence is ENEAQSDKSQDEQEIGEITVDMGE.

It belongs to the RNA polymerase beta' chain family. As to quaternary structure, the RNAP catalytic core consists of 2 alpha, 1 beta, 1 beta' and 1 omega subunit. When a sigma factor is associated with the core the holoenzyme is formed, which can initiate transcription. Requires Mg(2+) as cofactor. Zn(2+) serves as cofactor.

It catalyses the reaction RNA(n) + a ribonucleoside 5'-triphosphate = RNA(n+1) + diphosphate. DNA-dependent RNA polymerase catalyzes the transcription of DNA into RNA using the four ribonucleoside triphosphates as substrates. The sequence is that of DNA-directed RNA polymerase subunit beta' from Natranaerobius thermophilus (strain ATCC BAA-1301 / DSM 18059 / JW/NM-WN-LF).